Here is an 83-residue protein sequence, read N- to C-terminus: MGFVDMDYDIISYSDQMPLAQHYSYFIIYSPSKSRFHVIPYKDDEYLNRFYWLQISLGFSIDASNISSQYSANPTINLSLILD.

It localises to the plastid. Its subcellular location is the chloroplast. This is an uncharacterized protein from Pinus thunbergii (Japanese black pine).